Here is a 231-residue protein sequence, read N- to C-terminus: Probable septum site-determining protein MinC (231 aa).

The segment at 101–125 is disordered; the sequence is GKEKAPRPAPTPQAPAQNTTPVTKT. Residues 114–123 are compositionally biased toward low complexity; that stretch reads APAQNTTPVT.

It belongs to the MinC family. Interacts with MinD and FtsZ.

Cell division inhibitor that blocks the formation of polar Z ring septums. Rapidly oscillates between the poles of the cell to destabilize FtsZ filaments that have formed before they mature into polar Z rings. Prevents FtsZ polymerization. In Escherichia coli (strain ATCC 8739 / DSM 1576 / NBRC 3972 / NCIMB 8545 / WDCM 00012 / Crooks), this protein is Probable septum site-determining protein MinC.